Here is a 330-residue protein sequence, read N- to C-terminus: Type II methyltransferase M.HaeIII (330 aa).

The SAM-dependent MTase C5-type domain occupies 1 to 327 (MNLISLFSGA…KTIKSALEIC (327 aa)). Residues Glu-29 and 50–51 (DI) contribute to the ATP site. Cys-71 is an active-site residue. Asn-260 contacts ATP.

This sequence belongs to the class I-like SAM-binding methyltransferase superfamily. C5-methyltransferase family. Monomer.

It carries out the reaction a 2'-deoxycytidine in DNA + S-adenosyl-L-methionine = a 5-methyl-2'-deoxycytidine in DNA + S-adenosyl-L-homocysteine + H(+). Its function is as follows. A methylase, recognizes the double-stranded sequence 5'-GGCC-3', methylates C-3 on both strands, and protects the DNA from cleavage by the HaeIII endonuclease. The protein is Type II methyltransferase M.HaeIII (haeIIIM) of Haemophilus aegyptius.